A 173-amino-acid polypeptide reads, in one-letter code: Crossover junction endodeoxyribonuclease RuvC (173 aa).

Catalysis depends on residues D8, E67, and D139. The Mg(2+) site is built by D8, E67, and D139.

This sequence belongs to the RuvC family. In terms of assembly, homodimer which binds Holliday junction (HJ) DNA. The HJ becomes 2-fold symmetrical on binding to RuvC with unstacked arms; it has a different conformation from HJ DNA in complex with RuvA. In the full resolvosome a probable DNA-RuvA(4)-RuvB(12)-RuvC(2) complex forms which resolves the HJ. Requires Mg(2+) as cofactor.

The protein resides in the cytoplasm. The catalysed reaction is Endonucleolytic cleavage at a junction such as a reciprocal single-stranded crossover between two homologous DNA duplexes (Holliday junction).. In terms of biological role, the RuvA-RuvB-RuvC complex processes Holliday junction (HJ) DNA during genetic recombination and DNA repair. Endonuclease that resolves HJ intermediates. Cleaves cruciform DNA by making single-stranded nicks across the HJ at symmetrical positions within the homologous arms, yielding a 5'-phosphate and a 3'-hydroxyl group; requires a central core of homology in the junction. The consensus cleavage sequence is 5'-(A/T)TT(C/G)-3'. Cleavage occurs on the 3'-side of the TT dinucleotide at the point of strand exchange. HJ branch migration catalyzed by RuvA-RuvB allows RuvC to scan DNA until it finds its consensus sequence, where it cleaves and resolves the cruciform DNA. This chain is Crossover junction endodeoxyribonuclease RuvC, found in Shewanella sp. (strain MR-4).